A 315-amino-acid chain; its full sequence is Calumenin (315 aa).

An N-terminal signal peptide occupies residues 1–19; the sequence is MDLRQFLMCLSLCTAFALS. Serine 44 carries the post-translational modification Phosphoserine. At tyrosine 47 the chain carries Phosphotyrosine. Threonine 65 carries the phosphothreonine modification. EF-hand domains follow at residues 68-103, 104-139, 151-186, 188-223, 229-264, and 265-300; these read ESKE…AQKK, YIYD…TYLD, QMMV…EEYD, MKDI…HDGN, WVKT…SDYD, and HAEA…FVGS. Serine 69 is subject to Phosphoserine. Aspartate 81, aspartate 83, aspartate 85, glutamate 92, aspartate 117, asparagine 119, aspartate 121, and glutamate 128 together coordinate Ca(2+). Residue asparagine 131 is glycosylated (N-linked (GlcNAc...) asparagine). A Ca(2+)-binding site is contributed by aspartate 164. The residue at position 165 (lysine 165) is an N6-acetyllysine. 12 residues coordinate Ca(2+): aspartate 166, aspartate 168, glutamate 175, aspartate 201, asparagine 203, aspartate 205, glutamate 212, aspartate 242, asparagine 244, aspartate 246, lysine 248, and glutamate 253. Threonine 254 bears the Phosphothreonine mark. A phosphoserine mark is found at serine 261 and serine 277. Ca(2+) contacts are provided by aspartate 278, asparagine 280, aspartate 282, lysine 284, and glutamate 289. A Prevents secretion from ER motif is present at residues 312 to 315; that stretch reads HDEF.

Belongs to the CREC family. As to quaternary structure, interacts with GGCX.

The protein resides in the endoplasmic reticulum membrane. It is found in the golgi apparatus. The protein localises to the secreted. Its subcellular location is the melanosome. It localises to the sarcoplasmic reticulum lumen. Functionally, involved in regulation of vitamin K-dependent carboxylation of multiple N-terminal glutamate residues. Seems to inhibit gamma-carboxylase GGCX. Binds 7 calcium ions with a low affinity. This Bos taurus (Bovine) protein is Calumenin (CALU).